The primary structure comprises 582 residues: MSHDTKPNDTPAASNFLRSIIDQDLATGTYAGRADKQGDPLPTVITRFPPEPNGYLHIGHAKSICVNFGLARDYAGRCHLRFDDTNPVKEDTEYVDSIIDAVHWLGFSWDSAQAGSTPHLYFASDYFDQLYKFAETLIERGVAYVDSQSAEQIAAMRGNFSEPGKPSPFRDRSVEENLKLFREMRDGKYADGEHVLRAKIDMTAPNIVMRDPVLYRIRHAHHHRTGDKWCIYPMYDFTHCISDAIENITHSLCTLEFENNRPLYDWVLEHLRDAGVFANPLPHQYEFARLNLTYAITSKRRLKQLVDEQRVTGWDDPRMPTIVGIRRRGYTPESIQLFCDRVGVSKADSWIDMSTLEGAVRDDLDARAPRSVAVLDPLKLILDNYPEGQSEECSAPVHPKQPEMGRRVFPLSRELWIEREDFNENPPKGYFRLFPGNKVRLRYGYVIECTGVDKDADGNVIAVHANYLPETKSGTPGADSVKVKGNIHWVSAPHACEAEVRLYDRLFNDPNPDAGGKNFLDALNPESKKVVTAYLEPGLRDAKPEDRFQFERHGYFVADRVDSQPGKPVFNRTVGLKDSWGK.

The short motif at 50-60 (PEPNGYLHIGH) is the 'HIGH' region element. ATP contacts are provided by residues 51–53 (EPN) and 57–63 (HIGHAKS). L-glutamine contacts are provided by D83 and Y235. Residues T254 and 289 to 290 (RL) contribute to the ATP site. Residues 296 to 300 (ITSKR) carry the 'KMSKS' region motif.

Belongs to the class-I aminoacyl-tRNA synthetase family. As to quaternary structure, monomer.

It is found in the cytoplasm. It catalyses the reaction tRNA(Gln) + L-glutamine + ATP = L-glutaminyl-tRNA(Gln) + AMP + diphosphate. This Cupriavidus metallidurans (strain ATCC 43123 / DSM 2839 / NBRC 102507 / CH34) (Ralstonia metallidurans) protein is Glutamine--tRNA ligase.